The primary structure comprises 531 residues: UDP-glucuronosyltransferase 1A5 (531 aa).

Positions 1 to 25 (MGLHVTLQGLAGLLLLLYALPWAEG) are cleaved as a signal peptide. Residues asparagine 116, asparagine 131, asparagine 139, asparagine 293, and asparagine 431 are each glycosylated (N-linked (GlcNAc...) asparagine). Residues 489-505 (VIGFLLAIVLTVVFIVY) traverse the membrane as a helical segment.

Belongs to the UDP-glycosyltransferase family. In terms of assembly, homodimer. Homooligomer. Interacts with UGT1A1, UGT1A3, UGT1A4, UGT1A6, UGT1A7, UGT1A8, UGT1A9 and UGT1A10 to form heterodimers.

Its subcellular location is the endoplasmic reticulum membrane. The enzyme catalyses glucuronate acceptor + UDP-alpha-D-glucuronate = acceptor beta-D-glucuronoside + UDP + H(+). It catalyses the reaction zolasartan + UDP-alpha-D-glucuronate = zolarsartan-1-N-beta-D-glucuronide + UDP. Functionally, UDP-glucuronosyltransferase (UGT) that catalyzes phase II biotransformation reactions in which lipophilic substrates are conjugated with glucuronic acid to increase the metabolite's water solubility, thereby facilitating excretion into either the urine or bile. Essential for the elimination and detoxification of drugs, xenobiotics and endogenous compounds. Involved in the glucuronidation of the AGTR1 angiotensin receptor antagonist zolarsatan, a drug which can inhibit the effect of angiotensin II. The chain is UDP-glucuronosyltransferase 1A5 from Rattus norvegicus (Rat).